The primary structure comprises 678 residues: Nucleolar protein 9 (678 aa).

Basic residues predominate over residues 1 to 15 (MPRDKQKRGRRAEAK). The interval 1–24 (MPRDKQKRGRRAEAKRKRDDVITD) is disordered. Pumilio repeat units follow at residues 108-143 (EANG…RLFS), 291-334 (GLDN…SLLR), and 382-419 (KILV…SAMD). Residues 477–496 (QRSNQESDGTTSSSNTSSPE) form a disordered region. Pumilio repeat units lie at residues 524–562 (AVTT…QITS) and 563–600 (RFSG…RFAE).

The protein resides in the nucleus. It localises to the nucleolus. In terms of biological role, RNA-binding nucleolar protein required for pre-rRNA processing. Involved in production of 18S rRNA and assembly of small ribosomal subunit. The sequence is that of Nucleolar protein 9 (NOP9) from Paracoccidioides brasiliensis (strain Pb18).